Consider the following 115-residue polypeptide: Large ribosomal subunit protein uL18 (115 aa).

Positions 1–29 (MISKPDKNKLRQKRHTRVRGKISGTSETP) are disordered. Residues 10 to 20 (LRQKRHTRVRG) show a composition bias toward basic residues.

The protein belongs to the universal ribosomal protein uL18 family. Part of the 50S ribosomal subunit; part of the 5S rRNA/L5/L18/L25 subcomplex. Contacts the 5S and 23S rRNAs.

Functionally, this is one of the proteins that bind and probably mediate the attachment of the 5S RNA into the large ribosomal subunit, where it forms part of the central protuberance. The chain is Large ribosomal subunit protein uL18 from Lactococcus lactis subsp. lactis (strain IL1403) (Streptococcus lactis).